We begin with the raw amino-acid sequence, 262 residues long: 2-keto-4-pentenoate hydratase 2 (262 aa).

It belongs to the hydratase/decarboxylase family. MhpD subfamily. A divalent metal cation is required as a cofactor.

The enzyme catalyses (S)-4-hydroxy-2-oxopentanoate = (2Z)-2-hydroxypenta-2,4-dienoate + H2O. Its pathway is aromatic compound metabolism; 3-phenylpropanoate degradation. Its function is as follows. Catalyzes the conversion of 2-hydroxypentadienoic acid (enolic form of 2-oxopent-4-enoate) to 4-hydroxy-2-ketopentanoic acid. The protein is 2-keto-4-pentenoate hydratase 2 of Dechloromonas aromatica (strain RCB).